We begin with the raw amino-acid sequence, 81 residues long: Large ribosomal subunit protein bL31B (81 aa).

It belongs to the bacterial ribosomal protein bL31 family. Type B subfamily. As to quaternary structure, part of the 50S ribosomal subunit.

In Lactococcus lactis subsp. lactis (strain IL1403) (Streptococcus lactis), this protein is Large ribosomal subunit protein bL31B.